We begin with the raw amino-acid sequence, 600 residues long: Chaperone protein DnaK (600 aa).

Position 175 is a phosphothreonine; by autocatalysis (threonine 175). The span at 569 to 578 (SFAQATAQQA) shows a compositional bias: low complexity. Residues 569 to 600 (SFAQATAQQANTSESDPKADDSNTIDAEIKQD) are disordered. Over residues 583–600 (SDPKADDSNTIDAEIKQD) the composition is skewed to basic and acidic residues.

This sequence belongs to the heat shock protein 70 family.

Functionally, acts as a chaperone. The protein is Chaperone protein DnaK of Mesomycoplasma hyopneumoniae (strain 7448) (Mycoplasma hyopneumoniae).